A 327-amino-acid chain; its full sequence is Beta-ketoacyl-[acyl-carrier-protein] synthase III (327 aa).

Residues Cys114 and His254 contribute to the active site. An ACP-binding region spans residues 255–259 (QANRR). Asn284 is an active-site residue.

It belongs to the thiolase-like superfamily. FabH family. As to quaternary structure, homodimer.

The protein localises to the cytoplasm. It carries out the reaction malonyl-[ACP] + acetyl-CoA + H(+) = 3-oxobutanoyl-[ACP] + CO2 + CoA. It participates in lipid metabolism; fatty acid biosynthesis. Its function is as follows. Catalyzes the condensation reaction of fatty acid synthesis by the addition to an acyl acceptor of two carbons from malonyl-ACP. Catalyzes the first condensation reaction which initiates fatty acid synthesis and may therefore play a role in governing the total rate of fatty acid production. Possesses both acetoacetyl-ACP synthase and acetyl transacylase activities. Its substrate specificity determines the biosynthesis of branched-chain and/or straight-chain of fatty acids. The protein is Beta-ketoacyl-[acyl-carrier-protein] synthase III of Lactobacillus helveticus (strain DPC 4571).